Consider the following 479-residue polypeptide: Ribosomal lysine N-methyltransferase 2 (479 aa).

An SET domain is found at 22–325 (PNISICESPE…INEELFLNYG (304 aa)). Position 324 (tyrosine 324) interacts with S-adenosyl-L-methionine.

This sequence belongs to the class V-like SAM-binding methyltransferase superfamily. RKM2 family.

Its function is as follows. S-adenosyl-L-methionine-dependent protein-lysine N-methyltransferase that trimethylates 60S ribosomal protein L12 (RPL12A and RPL12B) at 'Lys-4' and 'Lys-11'. The chain is Ribosomal lysine N-methyltransferase 2 from Saccharomyces cerevisiae (strain ATCC 204508 / S288c) (Baker's yeast).